A 328-amino-acid polypeptide reads, in one-letter code: Putative UDP-N-acetylglucosamine--dolichyl-phosphate N-acetylglucosaminephosphotransferase (328 aa).

9 helical membrane-spanning segments follow: residues 1 to 21 (MLVSLLGILLSVIVGFVVTLI), 48 to 68 (VPVLGGIGIVAGFVAGSFTFL), 78 to 98 (IENVVVSILLSSLIIGFLGLL), 107 to 127 (ATRAFLPIFASIPLILYSVGH), 129 to 149 (IISIPFLGKVNFGILFYIIIL), 166 to 186 (LNGLGAGMGLIMALALAYIGL), 192 to 212 (SFYAGIVSIILASVLFGFLIF), 228 to 248 (FIGSVIGSIGISGYMYTALFF), and 301 to 321 (YHIVLIIWGIEILFAILAVVF).

This sequence belongs to the glycosyltransferase 4 family.

Its subcellular location is the cell membrane. It carries out the reaction a di-trans,poly-cis-dolichyl phosphate + UDP-N-acetyl-alpha-D-glucosamine = an N-acetyl-alpha-D-glucosaminyl-diphospho-di-trans,poly-cis-dolichol + UMP. Its activity is regulated as follows. Inhibited by tunicamycin. The protein is Putative UDP-N-acetylglucosamine--dolichyl-phosphate N-acetylglucosaminephosphotransferase (gnpTA) of Sulfolobus acidocaldarius (strain ATCC 33909 / DSM 639 / JCM 8929 / NBRC 15157 / NCIMB 11770).